The primary structure comprises 293 residues: Ubiquinone biosynthesis protein COQ9-B, mitochondrial (293 aa).

The tract at residues 21-73 (LRSDDQKQPPFSSSSTHAETPEHAEEQYQQQQSPPRYTDQAGEESEDYESEEQ) is disordered. A compositionally biased stretch (polar residues) spans 29–38 (PPFSSSSTHA). Over residues 61–72 (AGEESEDYESEE) the composition is skewed to acidic residues. R219 is an a 1,2-diacylglycero-3-phosphoethanolamine binding site.

The protein belongs to the COQ9 family. Homodimer. Heterodimer; two heterodimers of COQ7:COQ9 come together on the same side of the lipid pseudo-bilayer and form a curved tetramer with a hydrophobic surface suitable for membrane interaction. These two tetramers assemble into a soluble octamer with a pseudo-bilayer of lipids captured within. Interacts with COQ7; this interaction allows ubiquinone (CoQ) isoprene intermediates presentation to COQ7 and facilitates the COQ7-mediated hydroxylase step.

It is found in the mitochondrion. It participates in cofactor biosynthesis; ubiquinone biosynthesis. Membrane-associated protein that warps the membrane surface to access and bind aromatic isoprenes with high specificity, including ubiquinone (CoQ) isoprene intermediates and presents them directly to COQ7, therefore facilitating the COQ7-mediated hydroxylase step. Participates in the biosynthesis of coenzyme Q, also named ubiquinone, an essential lipid-soluble electron transporter for aerobic cellular respiration. The chain is Ubiquinone biosynthesis protein COQ9-B, mitochondrial (coq9-b) from Xenopus laevis (African clawed frog).